The following is a 226-amino-acid chain: ATP synthase subunit a (226 aa).

A run of 6 helical transmembrane segments spans residues 17–37 (FSYF…AMMA), 79–99 (LVAT…LPGF), 105–125 (SLNL…FEGI), 134–154 (FAHF…IEIV), 176–196 (LFLM…AYVL), and 199–219 (FMAF…LAGA).

This sequence belongs to the ATPase A chain family. As to quaternary structure, F-type ATPases have 2 components, CF(1) - the catalytic core - and CF(0) - the membrane proton channel. CF(1) has five subunits: alpha(3), beta(3), gamma(1), delta(1), epsilon(1). CF(0) has three main subunits: a(1), b(2) and c(9-12). The alpha and beta chains form an alternating ring which encloses part of the gamma chain. CF(1) is attached to CF(0) by a central stalk formed by the gamma and epsilon chains, while a peripheral stalk is formed by the delta and b chains.

Its subcellular location is the cell inner membrane. Functionally, key component of the proton channel; it plays a direct role in the translocation of protons across the membrane. This is ATP synthase subunit a from Campylobacter jejuni subsp. doylei (strain ATCC BAA-1458 / RM4099 / 269.97).